We begin with the raw amino-acid sequence, 214 residues long: CASP-like protein 3A1 (214 aa).

Residues 1-49 (MTNGQKIEVAVQLPESKVAATENNETMSGPLVVGGGVAKPFGRKADVMH) lie on the Cytoplasmic side of the membrane. A helical transmembrane segment spans residues 50 to 70 (VILRLLCTITSVTAVSFMVTA). The Extracellular portion of the chain corresponds to 71–96 (HQSSTVSIYGFMLPVRSKWSFSHSFE). Residues 97 to 117 (YLVGVSAAVAAHSLLQLLISM) traverse the membrane as a helical segment. Topologically, residues 118-132 (SRLLRKSPVIPSRSH) are cytoplasmic. A helical transmembrane segment spans residues 133 to 153 (AWLIFAGDQVFAYAMISAGAA). The Extracellular portion of the chain corresponds to 154-182 (ASGVTNLNRTGIQHTALPNFCKPLNYFCN). N-linked (GlcNAc...) asparagine glycosylation occurs at asparagine 161. Residues 183–203 (HVAVSIAFAFISCLLLAALAV) form a helical membrane-spanning segment. Topologically, residues 204–214 (QEVIWLSKSKY) are cytoplasmic.

This sequence belongs to the Casparian strip membrane proteins (CASP) family. In terms of assembly, homodimer and heterodimers.

The protein localises to the cell membrane. The sequence is that of CASP-like protein 3A1 from Ricinus communis (Castor bean).